The sequence spans 1072 residues: DNA-directed RNA polymerase subunit beta (1072 aa).

It belongs to the RNA polymerase beta chain family. In plastids the minimal PEP RNA polymerase catalytic core is composed of four subunits: alpha, beta, beta', and beta''. When a (nuclear-encoded) sigma factor is associated with the core the holoenzyme is formed, which can initiate transcription.

The protein resides in the plastid. It is found in the chloroplast. It catalyses the reaction RNA(n) + a ribonucleoside 5'-triphosphate = RNA(n+1) + diphosphate. Functionally, DNA-dependent RNA polymerase catalyzes the transcription of DNA into RNA using the four ribonucleoside triphosphates as substrates. This Lepidium virginicum (Virginia pepperweed) protein is DNA-directed RNA polymerase subunit beta.